We begin with the raw amino-acid sequence, 112 residues long: Nitrogen regulatory protein P-II (112 aa).

Tyr-51 carries the post-translational modification O-UMP-tyrosine.

This sequence belongs to the P(II) protein family. Homotrimer.

Functionally, in nitrogen-limiting conditions, when the ratio of Gln to 2-ketoglutarate decreases, P-II is uridylylated to P-II-UMP. P-II-UMP allows the deadenylation of glutamine synthetase (GS), thus activating the enzyme. Conversely, in nitrogen excess P-II is deuridylated and promotes the adenylation of GS. P-II indirectly controls the transcription of the GS gene (glnA). P-II prevents NR-II-catalyzed conversion of NR-I to NR-I-phosphate, the transcriptional activator of glnA. When P-II is uridylylated to P-II-UMP, these events are reversed. In Bradyrhizobium diazoefficiens (strain JCM 10833 / BCRC 13528 / IAM 13628 / NBRC 14792 / USDA 110), this protein is Nitrogen regulatory protein P-II (glnB).